We begin with the raw amino-acid sequence, 285 residues long: NADPH-dependent 7-cyano-7-deazaguanine reductase (285 aa).

Ile91–Ser93 contacts substrate. Ser93–Lys94 lines the NADPH pocket. Cys191 functions as the Thioimide intermediate in the catalytic mechanism. Asp198 functions as the Proton donor in the catalytic mechanism. Residue His230–Glu231 coordinates substrate. Arg259–Gly260 is a binding site for NADPH.

The protein belongs to the GTP cyclohydrolase I family. QueF type 2 subfamily. In terms of assembly, homodimer.

Its subcellular location is the cytoplasm. It carries out the reaction 7-aminomethyl-7-carbaguanine + 2 NADP(+) = 7-cyano-7-deazaguanine + 2 NADPH + 3 H(+). Its pathway is tRNA modification; tRNA-queuosine biosynthesis. Its function is as follows. Catalyzes the NADPH-dependent reduction of 7-cyano-7-deazaguanine (preQ0) to 7-aminomethyl-7-deazaguanine (preQ1). This is NADPH-dependent 7-cyano-7-deazaguanine reductase from Legionella pneumophila (strain Lens).